We begin with the raw amino-acid sequence, 122 residues long: uncharacterized protein (122 aa).

Positions 79–114 (VIEDVASAIKEMMESAAKDLDKIEEVIKESLEKYLR) form a coiled coil.

This is an uncharacterized protein from Archaeoglobus fulgidus (strain ATCC 49558 / DSM 4304 / JCM 9628 / NBRC 100126 / VC-16).